The sequence spans 466 residues: Coagulation factor IX (466 aa).

The signal sequence occupies residues 1 to 25 (MRCLNMIMAEPPGLITICLLGYLLG). Positions 26–46 (ADCTVFLDHEDATKVLSRPKR) are excised as a propeptide. Ca(2+) is bound by residues Tyr-47, Asn-48, Glu-53, Glu-54, Glu-61, Glu-63, Glu-66, Glu-67, Glu-72, Glu-73, and Glu-76. The 46-residue stretch at 47–92 (YNSGKLEEFVQGNLERECMEEKCSFEEAREVFENTEKTTEFWKQYV) folds into the Gla domain. 4-carboxyglutamate occurs at positions 53, 54, 61, 63, 66, 67, 72, 73, 76, 79, and 82. Residue Glu-61 coordinates Mg(2+). Cys-64 and Cys-69 are disulfide-bonded. Glu-66 is a Mg(2+) binding site. Glu-72 serves as a coordination point for Mg(2+). Glu-76 lines the Mg(2+) pocket. A Ca(2+)-binding site is contributed by Glu-82. Glu-82 is a binding site for Mg(2+). Thr-85 carries an O-linked (GalNAc...) threonine glycan. The Ca(2+) site is built by Glu-86, Asp-93, Gly-94, and Gln-96. Glu-86 carries the post-translational modification 4-carboxyglutamate. Glu-86 contributes to the Mg(2+) binding site. The 37-residue stretch at 93-129 (DGDQCESNPCLNGGICKDDINSYECWCQTGFEGKNCE) folds into the EGF-like 1; calcium-binding domain. 10 disulfide bridges follow: Cys-97–Cys-108, Cys-102–Cys-117, Cys-119–Cys-128, Cys-134–Cys-145, Cys-141–Cys-155, Cys-157–Cys-170, Cys-178–Cys-340, Cys-257–Cys-273, Cys-387–Cys-401, and Cys-412–Cys-440. Ser-99 carries O-linked (Glc...) serine glycosylation. Ca(2+) contacts are provided by Asp-110 and Asp-111. At Asp-110 the chain carries (3R)-3-hydroxyaspartate. The residue at position 114 (Ser-114) is a Phosphoserine. The 42-residue stretch at 130-171 (LDVTCNIKNGRCKQFCKLDADNKVVCSCTTGYQLAEDQKSCE) folds into the EGF-like 2 domain. The propeptide at 193-231 (AETLFLNMDYENSTTDYENSAEAEKNVDNVTQPLNDLTR) is activation peptide. At Tyr-202 the chain carries Sulfotyrosine. The residue at position 205 (Ser-205) is a Phosphoserine. Thr-206 is modified (phosphothreonine; alternate). O-linked (GalNAc...) threonine; alternate glycosylation occurs at Thr-206. N-linked (GlcNAc...) asparagine glycosylation occurs at Asn-221. Thr-223 and Thr-230 each carry an O-linked (GalNAc...) threonine glycan. The Peptidase S1 domain occupies 232–464 (IVGGKTAKPG…YVNWIKEKTK (233 aa)). His-272 functions as the Charge relay system in the catalytic mechanism. 5 residues coordinate Ca(2+): Glu-286, Asn-288, Glu-291, Glu-293, and Glu-296. Residue Asp-320 is the Charge relay system of the active site. Ser-416 serves as the catalytic Charge relay system.

Belongs to the peptidase S1 family. As to quaternary structure, heterodimer of a light chain and a heavy chain; disulfide-linked. Interacts (inactive and activated) with F11 (activated) in calcium-dependent manner. Interacts with SERPINC1. Post-translationally, the iron and 2-oxoglutarate dependent 3-hydroxylation of aspartate and asparagine is (R) stereospecific within EGF domains. Activated by factor XIa, which excises the activation peptide. The propeptide can also be removed by snake venom protease. Activated by coagulation factor VIIa-tissue factor (F7-F3) complex in calcium-dependent manner. In terms of processing, predominantly O-glucosylated at Ser-99 by POGLUT1 in vitro.

The protein localises to the secreted. It carries out the reaction Selective cleavage of Arg-|-Ile bond in factor X to form factor Xa.. Functionally, factor IX is a vitamin K-dependent plasma protein that participates in the intrinsic pathway of blood coagulation by converting factor X to its active form in the presence of Ca(2+) ions, phospholipids, and factor VIIIa. This chain is Coagulation factor IX (F9), found in Felis catus (Cat).